Here is a 1173-residue protein sequence, read N- to C-terminus: DNA-directed RNA polymerase subunit beta (1173 aa).

It belongs to the RNA polymerase beta chain family. As to quaternary structure, the RNAP catalytic core consists of 2 alpha, 1 beta, 1 beta' and 1 omega subunit. When a sigma factor is associated with the core the holoenzyme is formed, which can initiate transcription.

It carries out the reaction RNA(n) + a ribonucleoside 5'-triphosphate = RNA(n+1) + diphosphate. DNA-dependent RNA polymerase catalyzes the transcription of DNA into RNA using the four ribonucleoside triphosphates as substrates. The protein is DNA-directed RNA polymerase subunit beta of Kosmotoga olearia (strain ATCC BAA-1733 / DSM 21960 / TBF 19.5.1).